Reading from the N-terminus, the 358-residue chain is Molybdenum import ATP-binding protein ModC (358 aa).

One can recognise an ABC transporter domain in the interval 2–234 (NDDISASFFS…PDLPLAHLEE (233 aa)). 34–41 (GRSGSGKT) is a binding site for ATP. The region spanning 293–358 (LSSISNCIPV…AQVKSVALID (66 aa)) is the Mop domain.

It belongs to the ABC transporter superfamily. Molybdate importer (TC 3.A.1.8) family. In terms of assembly, the complex is composed of two ATP-binding proteins (ModC), two transmembrane proteins (ModB) and a solute-binding protein (ModA).

The protein resides in the cell inner membrane. The enzyme catalyses molybdate(out) + ATP + H2O = molybdate(in) + ADP + phosphate + H(+). Part of the ABC transporter complex ModABC involved in molybdenum import. Responsible for energy coupling to the transport system. In Hahella chejuensis (strain KCTC 2396), this protein is Molybdenum import ATP-binding protein ModC.